The following is a 42-amino-acid chain: Potassium channel toxin gamma-KTx 1.3 (42 aa).

Disulfide bonds link Cys5–Cys23, Cys11–Cys34, Cys20–Cys39, and Cys24–Cys41.

It belongs to the ergtoxin family. Gamma-KTx 1 subfamily. Expressed by the venom gland.

Its subcellular location is the secreted. Blocks Kv11/ERG potassium channels. This is Potassium channel toxin gamma-KTx 1.3 from Centruroides gracilis (Slenderbrown scorpion).